Here is a 415-residue protein sequence, read N- to C-terminus: Diaminopimelate decarboxylase (415 aa).

Residue Lys-54 is modified to N6-(pyridoxal phosphate)lysine. Pyridoxal 5'-phosphate-binding positions include Gly-223 and 264–267; that span reads EPGR. 3 residues coordinate substrate: Arg-267, Arg-303, and Tyr-307. Cys-338 (proton donor) is an active-site residue. Substrate is bound by residues Glu-339 and Tyr-374. Tyr-374 contributes to the pyridoxal 5'-phosphate binding site.

This sequence belongs to the Orn/Lys/Arg decarboxylase class-II family. LysA subfamily. As to quaternary structure, homodimer. It depends on pyridoxal 5'-phosphate as a cofactor.

The enzyme catalyses meso-2,6-diaminopimelate + H(+) = L-lysine + CO2. The protein operates within amino-acid biosynthesis; L-lysine biosynthesis via DAP pathway; L-lysine from DL-2,6-diaminopimelate: step 1/1. Functionally, specifically catalyzes the decarboxylation of meso-diaminopimelate (meso-DAP) to L-lysine. The protein is Diaminopimelate decarboxylase of Buchnera aphidicola subsp. Acyrthosiphon pisum (strain APS) (Acyrthosiphon pisum symbiotic bacterium).